The primary structure comprises 348 residues: Heat-inducible transcription repressor HrcA (348 aa).

The protein belongs to the HrcA family.

Functionally, negative regulator of class I heat shock genes (grpE-dnaK-dnaJ and groELS operons). Prevents heat-shock induction of these operons. This chain is Heat-inducible transcription repressor HrcA, found in Pelotomaculum thermopropionicum (strain DSM 13744 / JCM 10971 / SI).